An 898-amino-acid chain; its full sequence is DNA-directed DNA polymerase (898 aa).

The 3'-5'exonuclease stretch occupies residues 101-337 (YDRKFVRVAN…VQAIDKIRGF (237 aa)). Mg(2+) contacts are provided by D112, E114, and D219. A beta hairpin region spans residues 245-261 (VKSKLIQNMYGSKEIYS). 3 residues coordinate Mg(2+): D324, D408, and L409. The segment at 377 to 898 (IPQQGSHVKQ…EKASLDFLFG (522 aa)) is polymerase. Residues 411–413 (SLY), R479, and K557 each bind substrate. D620 serves as a coordination point for Mg(2+). Residues 702–705 (KKRY) are binding of DNA in B-conformation. The segment at 893-898 (LDFLFG) is interaction with the polymerase clamp.

Belongs to the DNA polymerase type-B family. As to quaternary structure, interacts with the polymerase clamp; this interaction constitutes the polymerase holoenzyme. Interacts with the helicase assembly factor. Part of the replicase complex that includes the DNA polymerase, the polymerase clamp, the clamp loader complex, the single-stranded DNA binding protein, the primase, the helicase and the helicase assembly factor. The cofactor is Mg(2+).

It catalyses the reaction DNA(n) + a 2'-deoxyribonucleoside 5'-triphosphate = DNA(n+1) + diphosphate. Its function is as follows. Replicates the viral genomic DNA. This polymerase possesses two enzymatic activities: DNA synthesis (polymerase) and an exonucleolytic activity that degrades single-stranded DNA in the 3'- to 5'-direction for proofreading purpose. This chain is DNA-directed DNA polymerase (43), found in Enterobacteria phage T4 (Bacteriophage T4).